Consider the following 182-residue polypeptide: dCTP deaminase, dUMP-forming (182 aa).

Residues 96–101 (RSSIGR), D113, 121–123 (TLE), Q142, Y156, and Q163 contribute to the dCTP site. Catalysis depends on E123, which acts as the Proton donor/acceptor.

It belongs to the dCTP deaminase family. In terms of assembly, homotrimer.

It catalyses the reaction dCTP + 2 H2O = dUMP + NH4(+) + diphosphate. It functions in the pathway pyrimidine metabolism; dUMP biosynthesis; dUMP from dCTP: step 1/1. Functionally, bifunctional enzyme that catalyzes both the deamination of dCTP to dUTP and the hydrolysis of dUTP to dUMP without releasing the toxic dUTP intermediate. In Halothermothrix orenii (strain H 168 / OCM 544 / DSM 9562), this protein is dCTP deaminase, dUMP-forming.